A 316-amino-acid chain; its full sequence is Olfactory receptor 2AG2 (316 aa).

Over 1–30 (MELRNSTLGSGFILVGILNDSGSPELLYAT) the chain is Extracellular. 2 N-linked (GlcNAc...) asparagine glycosylation sites follow: N5 and N19. Residues 31-51 (FTILYMLALTSNGLLLLAITI) form a helical membrane-spanning segment. The Cytoplasmic portion of the chain corresponds to 52–56 (EARLH). A helical membrane pass occupies residues 57-77 (MPMYLLLGQLSLMDLLFTSVV). Residues 78-97 (TPKALADFLRRENTISFGGC) lie on the Extracellular side of the membrane. C97 and C179 form a disulfide bridge. The chain crosses the membrane as a helical span at residues 98–118 (ALQMFLALTMGSAEDLLLAFM). At 119–139 (AYDRYVAICHPLKYMTLMSPR) the chain is on the cytoplasmic side. A helical membrane pass occupies residues 140–160 (VCWIMVATSWILASLIAIGHT). Over 161-205 (MYTMHLPFCVSWEIRHLLCEIPPLLKLACADTSRYELIIYVTGVT) the chain is Extracellular. Residues 206-226 (FLLLPISAIVASYTLVLFTVL) traverse the membrane as a helical segment. Residues 227 to 244 (RMPSNEGRKKALVTCSSH) are Cytoplasmic-facing. The helical transmembrane segment at 245–265 (LIVVGMFYGAATFMYVLPSSF) threads the bilayer. At 266–271 (HSPKQD) the chain is on the extracellular side. The helical transmembrane segment at 272-292 (NIISVFYTIVTPALNPLIYSL) threads the bilayer. At 293 to 316 (RNKEVMRALRRVLGKYILLAHSTL) the chain is on the cytoplasmic side.

This sequence belongs to the G-protein coupled receptor 1 family.

Its subcellular location is the cell membrane. In terms of biological role, odorant receptor. In Homo sapiens (Human), this protein is Olfactory receptor 2AG2 (OR2AG2).